Consider the following 1096-residue polypeptide: Cation-transporting ATPase 5 (1096 aa).

The Cytoplasmic segment spans residues 1–19 (MDSIELKQLVPENDSEPGT). The chain crosses the membrane as a helical span at residues 20 to 41 (PRQLLFQHYDISNEETIGIKPF). Residues 42–47 (KSIPAK) lie on the Lumenal side of the membrane. A helical transmembrane segment spans residues 48–70 (VYILRVTEILTLGLLHLILTWLP). The Cytoplasmic portion of the chain corresponds to 71 to 193 (EFRLKWIEAP…LVSTKKSIVT (123 aa)). A helical membrane pass occupies residues 194–216 (ILLNEVLHPFYLFQAVSVLIWLC). Residues 217 to 220 (DSFV) lie on the Lumenal side of the membrane. A helical membrane pass occupies residues 221 to 238 (FYSCCIVFISSYSIFLSV). At 239 to 391 (KESKESENRI…NLRPSQLYLD (153 aa)) the chain is on the cytoplasmic side. The helical transmembrane segment at 392–412 (SMSFLKTMAILSFVSIVFIAI) threads the bilayer. The Lumenal segment spans residues 413–425 (YLNLYNASFGHVV). A helical transmembrane segment spans residues 426 to 447 (LRSLDVLTILVPPALPATLSVG). At 448 to 895 (IANSIARLSR…SLILSHRCFQ (448 aa)) the chain is on the cytoplasmic side. Asp-480 acts as the 4-aspartylphosphate intermediate in catalysis. Asp-838 and Asp-842 together coordinate Mg(2+). A helical membrane pass occupies residues 896-915 (YMVLCAIVQFSGVFFLYLKN). Residues 916 to 922 (YNFNDNQ) are Lumenal-facing. Residues 923 to 940 (FLFMDLLIIFPLSAAMSY) form a helical membrane-spanning segment. Over 941 to 958 (FDPAQNLTSNRPNSTLFG) the chain is Cytoplasmic. A helical transmembrane segment spans residues 959–982 (KGRVKDLGIQSVLIWLSHGLLTLI). The Lumenal segment spans residues 983-1003 (LHELNWVELPEWQLEKSNTKN). Residues 1004 to 1026 (VLVTSIFLLSSLQYLGICIGINQ) form a helical membrane-spanning segment. The Cytoplasmic portion of the chain corresponds to 1027–1040 (SSEFLSPIWKKKTY). A helical transmembrane segment spans residues 1041-1060 (VCLCTTIGLCNIYLCFANEN). Over 1061-1075 (HIISRCLQITRLPTL) the chain is Lumenal. The chain crosses the membrane as a helical span at residues 1076–1096 (YRFIILFMGVISCCLTSILNM).

It belongs to the cation transport ATPase (P-type) (TC 3.A.3) family. Type V subfamily.

It localises to the endoplasmic reticulum membrane. The protein localises to the golgi apparatus membrane. It carries out the reaction ATP + H2O = ADP + phosphate + H(+). Plays a role in regulating calcium and manganese homeostasis responsible for cell cycle progression. The chain is Cation-transporting ATPase 5 (cta5) from Schizosaccharomyces pombe (strain 972 / ATCC 24843) (Fission yeast).